Consider the following 257-residue polypeptide: MKTHKIFWLNLAAIIIISIVVSGGMFLAMKWEQIHLKDGLKKVLSTYPIKNLETLYEIDGHDNPHYENNDQDTWYIESSYSVVGSDELLKEDRMLLKVDKNTHKITGEYDTTTNDRKDATDSTYKSYPVKVVNNKIVFTKDVKDPALKQKIENNQFLIQSGDLTSILNSNDLKVTHDPTTDYYNLSGKLSNDNPNVKQLKRRYNIPSNASTKVELKGMSDLKGNNHQDQKLYFYFSSPGKNQIIYKESLTYNKLSEH.

The chain crosses the membrane as a helical span at residues 6-26 (IFWLNLAAIIIISIVVSGGMF).

The protein belongs to the staphylococcal tandem lipoprotein family.

It is found in the cell membrane. This is an uncharacterized protein from Staphylococcus aureus (strain Mu50 / ATCC 700699).